The primary structure comprises 237 residues: Small ribosomal subunit protein uS3 (237 aa).

The KH type-2 domain occupies 39-107 (IRAYLMEELK…ETHLNIVEVR (69 aa)). The segment at 213–237 (MASERRATESDNQGGSGRERRRENA) is disordered.

Belongs to the universal ribosomal protein uS3 family. Part of the 30S ribosomal subunit. Forms a tight complex with proteins S10 and S14.

In terms of biological role, binds the lower part of the 30S subunit head. Binds mRNA in the 70S ribosome, positioning it for translation. This chain is Small ribosomal subunit protein uS3, found in Rhizobium meliloti (strain 1021) (Ensifer meliloti).